The primary structure comprises 1093 residues: GPI ethanolamine phosphate transferase 3, catalytic subunit (1093 aa).

Residues 4–24 (VSVLLFLAWVCFLFYAGIALF) traverse the membrane as a helical segment. N-linked (GlcNAc...) asparagine glycosylation is present at Asn268. Helical transmembrane passes span 460–480 (AAACLLCLLASQLAVAPGFLF), 483–503 (LLLIPVAWGLTWTILYAGVSV), 512–532 (VVLGAVAAAGSLLPFLWKAWV), 669–689 (LWYGACVGALVALLVVVRLWL), 702–722 (VLFVRWGMPLMVLGTAAYWAL), 748–768 (VMGLAALGLVLLLWRPVTVLV), 831–851 (SVYSAAMVTALLLLAFPLMLL), 856–876 (VSLVFLLLFLQSFLLLHLLAA), and 945–965 (FASHLLFAVGCPLLLLWPFLC). Positions 971–991 (KRRQPLPGSESEARVRPEEEE) are disordered. 2 helical membrane passes run 1018 to 1038 (LKYLFILGAQILACALAASIL) and 1052 to 1072 (FIFEAVGFIVSSVGLLLGIAL).

The protein belongs to the PIGG/PIGN/PIGO family. PIGO subfamily. As to quaternary structure, forms the ethanolamine phosphate transferase 3 complex composed by PIGO and PIGF. PIGF is required to stabilize PIGO.

It localises to the endoplasmic reticulum membrane. Its pathway is glycolipid biosynthesis; glycosylphosphatidylinositol-anchor biosynthesis. Its function is as follows. Catalytic subunit of the ethanolamine phosphate transferase 3 complex that transfers an ethanolamine phosphate (EtNP) from a phosphatidylethanolamine (PE) to the 6-OH position of the third alpha-1,2-linked mannose of the an alpha-D-Man-(1-&gt;2)-alpha-D-Man-(1-&gt;6)-2-PEtn-alpha-D-Man-(1-&gt;4)-alpha-D-GlcN-(1-&gt;6)-(1-radyl,2-acyl-sn-glycero-3-phospho)-2-acyl-inositol (also termed H6) intermediate to generate a 6-PEtn-alpha-D-Man-(1-&gt;2)-alpha-D-Man-(1-&gt;6)-2-PEtn-alpha-D-Man-(1-&gt;4)-alpha-D-GlcN-(1-&gt;6)-(1-radyl,2-acyl-sn-glycero-3-phospho)-2-acyl-inositol (also termed H7) and participates in the tenth step of the glycosylphosphatidylinositol-anchor biosynthesis. The sequence is that of GPI ethanolamine phosphate transferase 3, catalytic subunit from Mus musculus (Mouse).